The following is a 376-amino-acid chain: Chaperone protein DnaJ (376 aa).

Residues Asp-5–Gly-70 form the J domain. Residues Gly-132–Ser-210 form a CR-type zinc finger. Positions 145, 148, 162, 165, 184, 187, 198, and 201 each coordinate Zn(2+). CXXCXGXG motif repeat units follow at residues Cys-145–Gly-152, Cys-162–Gly-169, Cys-184–Gly-191, and Cys-198–Gly-205.

Belongs to the DnaJ family. Homodimer. Zn(2+) is required as a cofactor.

It localises to the cytoplasm. Functionally, participates actively in the response to hyperosmotic and heat shock by preventing the aggregation of stress-denatured proteins and by disaggregating proteins, also in an autonomous, DnaK-independent fashion. Unfolded proteins bind initially to DnaJ; upon interaction with the DnaJ-bound protein, DnaK hydrolyzes its bound ATP, resulting in the formation of a stable complex. GrpE releases ADP from DnaK; ATP binding to DnaK triggers the release of the substrate protein, thus completing the reaction cycle. Several rounds of ATP-dependent interactions between DnaJ, DnaK and GrpE are required for fully efficient folding. Also involved, together with DnaK and GrpE, in the DNA replication of plasmids through activation of initiation proteins. This chain is Chaperone protein DnaJ, found in Shewanella loihica (strain ATCC BAA-1088 / PV-4).